Here is a 252-residue protein sequence, read N- to C-terminus: MSRTPIIAGNWKLNMNPKETVEFVNAVKDQLPDPSKVESVICAPAVDLDALLKAAEGSNLHVGAENCYWENSGAFTGETSPAVLKEMGVQYVIIGHSERRDYFHETDEDINKKAKAIFANGLTPILCCGESLEIREAGKEKEWVVSQIKADLEGLTSEQVSKLVIAYEPIWAIGTGKTASSDQAEEMCKTIRETVKDLYNEETAENVRIQYGGSVKPANIKELMAKPNIDGGLVGGASLVPDSYLALVNYQD.

10–12 (NWK) contributes to the substrate binding site. Histidine 96 functions as the Electrophile in the catalytic mechanism. Residue glutamate 168 is the Proton acceptor of the active site. Residues glycine 174, serine 214, and 235–236 (GG) each bind substrate.

The protein belongs to the triosephosphate isomerase family. Homodimer.

It localises to the cytoplasm. It carries out the reaction D-glyceraldehyde 3-phosphate = dihydroxyacetone phosphate. It functions in the pathway carbohydrate biosynthesis; gluconeogenesis. The protein operates within carbohydrate degradation; glycolysis; D-glyceraldehyde 3-phosphate from glycerone phosphate: step 1/1. In terms of biological role, seems to be capable of enhancing bacteriocin synthesis. Functionally, involved in the gluconeogenesis. Catalyzes stereospecifically the conversion of dihydroxyacetone phosphate (DHAP) to D-glyceraldehyde-3-phosphate (G3P). This is Triosephosphate isomerase from Lactobacillus delbrueckii subsp. lactis.